The following is a 25-amino-acid chain: Omega-conotoxin CVIB (25 aa).

3 cysteine pairs are disulfide-bonded: Cys-1-Cys-16, Cys-8-Cys-20, and Cys-15-Cys-25. Cys-25 is modified (cysteine amide).

It belongs to the conotoxin O1 superfamily. As to expression, expressed by the venom duct.

It localises to the secreted. Omega-conotoxins act at presynaptic membranes, they bind and block voltage-gated calcium channels (Cav). This toxin blocks N-, P- and Q-type calcium channels. It shows high activities on Cav2.1/CACNA1A (IC(50)=11 nM) and Cav2.2/CACNA1B (IC(50)=7.7 nM). In addition, it shows a higher potency when Cav2.2/CACNA1B is only expressed with the ancillary subunit CACNB3 (IC(50)=1.6 nM) than on Cav2.2/CACNA1B expressed with the ancillary subunits CACNA2D1 and CACNB3 (IC(50)=12 nM). Both the Cav2.2/CACNA1B block by this toxin and the recovery are voltage-independent. It is noteworthy that ancillary subunits beta do not modulate recovery from this toxin block, since Cav2.2/CACNA1B expressed with either the ancillary subunit CACNB2a (isoform 2a) or with CACNB3 exhibits moderate recovery. This is Omega-conotoxin CVIB from Conus catus (Cat cone).